The following is a 56-amino-acid chain: MKRQKRDRLARALSKGYQAGMQGRSKEQCPYFAIDARSHWLGGWRQAMEDRPGLAK.

It belongs to the ribosome modulation factor family.

Its subcellular location is the cytoplasm. Its function is as follows. During stationary phase, converts 70S ribosomes to an inactive dimeric form (100S ribosomes). In Proteus mirabilis (strain HI4320), this protein is Ribosome modulation factor.